A 433-amino-acid chain; its full sequence is Shikimate O-hydroxycinnamoyltransferase (433 aa).

His153 acts as the Proton acceptor in catalysis. 4-coumaroyl-CoA-binding positions include 252-255 (SSYE), 284-290 (DGRSRLR), and 370-373 (SWVR). The active-site Proton acceptor is the Asp380.

This sequence belongs to the plant acyltransferase family.

It carries out the reaction shikimate + 4-coumaroyl-CoA = trans-4-coumaroylshikimate + CoA. Acyltransferase involved in the biosynthesis of lignin. Accepts caffeoyl-CoA and p-coumaroyl-CoA as substrates and transfers the acyl group on both shikimate and quinate acceptors. The protein is Shikimate O-hydroxycinnamoyltransferase (HST) of Arabidopsis thaliana (Mouse-ear cress).